A 48-amino-acid polypeptide reads, in one-letter code: Sperm protamine P1 (48 aa).

It belongs to the protamine P1 family. As to quaternary structure, cross-linked by interchain disulfide bonds around the DNA-helix. Testis.

It localises to the nucleus. It is found in the chromosome. Functionally, protamines substitute for histones in the chromatin of sperm during the haploid phase of spermatogenesis. They compact sperm DNA into a highly condensed, stable and inactive complex. This chain is Sperm protamine P1 (PRM1), found in Cavia porcellus (Guinea pig).